The primary structure comprises 337 residues: tRNA dimethylallyltransferase (337 aa).

Gly24–Thr31 provides a ligand contact to ATP. Residue Thr26–Thr31 coordinates substrate. 2 interaction with substrate tRNA regions span residues Asp49–Gln52 and Gln188–Arg192.

It belongs to the IPP transferase family. In terms of assembly, monomer. Requires Mg(2+) as cofactor.

The enzyme catalyses adenosine(37) in tRNA + dimethylallyl diphosphate = N(6)-dimethylallyladenosine(37) in tRNA + diphosphate. Its function is as follows. Catalyzes the transfer of a dimethylallyl group onto the adenine at position 37 in tRNAs that read codons beginning with uridine, leading to the formation of N6-(dimethylallyl)adenosine (i(6)A). The sequence is that of tRNA dimethylallyltransferase from Nitratidesulfovibrio vulgaris (strain DSM 19637 / Miyazaki F) (Desulfovibrio vulgaris).